We begin with the raw amino-acid sequence, 237 residues long: MPNQIRAQLLELNKNTKSNNVKQQLEIIENINSNDSIELKDLADLFFERITGPNYKSNCVDGLIYEKLLNSKNQEIVKFASNLCPDGIVPLRSAQQMNYKDLQMLLTHRDLLKADQLTQQKLIQLAGVNAQTRNWLYFTDIKKIPAQDLQTIDKLWHTHSKGKFGLFVQRQIWLSVGKDWGKFWQKIGWEVDRIPCRYPEEFQWNSHGPRGHLPLFNQLRGVQVLSALFTHKAWENY.

This sequence belongs to the ycf53 family.

The protein resides in the plastid. The protein localises to the chloroplast. This is an uncharacterized protein from Pyropia yezoensis (Susabi-nori).